The following is a 399-amino-acid chain: MSRVVLAMSGGVDSSVAAHLLLRDGHEVIGVFMRHGEASAAACRIDSDEPQNTNPLNLPVLGDSAGGKRADHKQGCCSATDAADARRVAMSMGIPFYSLDLQEDFRKIVDYFVDDYLAARTPNPCVKCNHWIKFGRLFDYADGVDAEFVATGHYARMVHSNGRSELHRGLDGHKDQSYALFGIDPARLSRMMLPVGDFTKPEIREMATSLGLGVSDKKDSQEICFVTQGHHSDFVKSRRPEMVGATAGEIVTTGGKVVGEHKGFEAFTIGQRKRLGVAMGEPHFVIRIEPDTRRVVIGRAEELLRPGLVADQCNWFVTREELADAQSVGIQIRYNGQPHPGHVVMDGSDPTRMKVMFDDPQAAVAPGQAAVVYDGERVLGGGWITHAIDHIADGSPPPA.

ATP-binding positions include 7–14 and methionine 33; that span reads AMSGGVDS. Cysteine 128 functions as the Nucleophile in the catalytic mechanism. A disulfide bridge links cysteine 128 with cysteine 224. Glycine 152 is an ATP binding site. The tract at residues 174 to 176 is interaction with tRNA; the sequence is KDQ. Cysteine 224 acts as the Cysteine persulfide intermediate in catalysis. Positions 333–334 are interaction with tRNA; sequence RY.

This sequence belongs to the MnmA/TRMU family.

The protein localises to the cytoplasm. The catalysed reaction is S-sulfanyl-L-cysteinyl-[protein] + uridine(34) in tRNA + AH2 + ATP = 2-thiouridine(34) in tRNA + L-cysteinyl-[protein] + A + AMP + diphosphate + H(+). Functionally, catalyzes the 2-thiolation of uridine at the wobble position (U34) of tRNA, leading to the formation of s(2)U34. This Rhodopirellula baltica (strain DSM 10527 / NCIMB 13988 / SH1) protein is tRNA-specific 2-thiouridylase MnmA.